A 141-amino-acid chain; its full sequence is Superoxide dismutase [Cu-Zn], chloroplastic (141 aa).

Cu cation-binding residues include His33, His35, and His50. Cys44 and Cys133 form a disulfide bridge. Residues His50, His58, His67, and Asp70 each contribute to the Zn(2+) site. His107 provides a ligand contact to Cu cation.

It belongs to the Cu-Zn superoxide dismutase family. In terms of assembly, homotetramer. Cu cation serves as cofactor. It depends on Zn(2+) as a cofactor.

The protein localises to the plastid. It is found in the chloroplast. The catalysed reaction is 2 superoxide + 2 H(+) = H2O2 + O2. In terms of biological role, destroys radicals which are normally produced within the cells and which are toxic to biological systems. This is Superoxide dismutase [Cu-Zn], chloroplastic (SODCP) from Pinus sylvestris (Scotch pine).